The chain runs to 232 residues: Sugar fermentation stimulation protein homolog (232 aa).

This sequence belongs to the SfsA family.

This chain is Sugar fermentation stimulation protein homolog, found in Brucella anthropi (strain ATCC 49188 / DSM 6882 / CCUG 24695 / JCM 21032 / LMG 3331 / NBRC 15819 / NCTC 12168 / Alc 37) (Ochrobactrum anthropi).